The chain runs to 244 residues: Kallikrein-6 (244 aa).

The first 16 residues, 1 to 16 (MKKLMVVLSLIAAAWA), serve as a signal peptide directing secretion. A propeptide spans 17–21 (EEQNK) (activation peptide). The region spanning 22–242 (LVHGGPCDKT…YTNWIQKTIQ (221 aa)) is the Peptidase S1 domain. Intrachain disulfides connect cysteine 28-cysteine 157, cysteine 47-cysteine 63, cysteine 131-cysteine 231, cysteine 138-cysteine 203, cysteine 168-cysteine 182, and cysteine 193-cysteine 218. Active-site charge relay system residues include histidine 62 and aspartate 106. N-linked (GlcNAc...) asparagine glycosylation is present at asparagine 134. Catalysis depends on serine 197, which acts as the Charge relay system.

In terms of processing, inactivated by autolytic cleavage after Arg-80. As to expression, in fluids, highest levels found in milk of lactating women followed by cerebrospinal fluid, nipple aspirate fluid and breast cyst fluid. Also found in serum, seminal plasma and some amniotic fluids and breast tumor cytosolic extracts. Not detected in urine. At the tissue level, highest concentrations found in glandular tissues such as salivary glands followed by lung, colon, fallopian tube, placenta, breast, pituitary and kidney. Not detected in skin, spleen, bone, thyroid, heart, ureter, liver, muscle, endometrium, testis, pancreas, seminal vesicle, ovary, adrenals and prostate. In brain, detected in gray matter neurons (at protein level). Colocalizes with pathological inclusions such as Lewy bodies and glial cytoplasmic inclusions. Overexpressed in primary breast tumors but not expressed in metastatic tumors.

It is found in the secreted. Its subcellular location is the nucleus. The protein resides in the nucleolus. It localises to the cytoplasm. The protein localises to the mitochondrion. It is found in the microsome. Its activity is regulated as follows. Inhibited by a range of serine protease inhibitors including soybean trypsin inhibitor, benzamidine and serpins. Activated by a range of glycosaminoglycans including chondroitin sulfate, dermatan sulfate, heparan sulfate and heparin. In terms of biological role, serine protease which exhibits a preference for Arg over Lys in the substrate P1 position and for Ser or Pro in the P2 position. Shows activity against amyloid precursor protein, myelin basic protein, gelatin, casein and extracellular matrix proteins such as fibronectin, laminin, vitronectin and collagen. Degrades alpha-synuclein and prevents its polymerization, indicating that it may be involved in the pathogenesis of Parkinson disease and other synucleinopathies. May be involved in regulation of axon outgrowth following spinal cord injury. Tumor cells treated with a neutralizing KLK6 antibody migrate less than control cells, suggesting a role in invasion and metastasis. The chain is Kallikrein-6 (KLK6) from Homo sapiens (Human).